The chain runs to 377 residues: Outer membrane porin N (377 aa).

An N-terminal signal peptide occupies residues 1–21 (MKSKVLALLIPALLAAGAAHA). Positions 175–189 (NNEGASNGQEGTNNG) are enriched in polar residues. Residues 175–196 (NNEGASNGQEGTNNGRDVRHEN) form a disordered region.

Belongs to the Gram-negative porin family. Homotrimer.

The protein resides in the cell outer membrane. In terms of biological role, forms pores that allow passive diffusion of small molecules across the outer membrane. Non-specific porin. The protein is Outer membrane porin N (ompN) of Escherichia coli (strain K12).